The chain runs to 241 residues: Ribose-5-phosphate isomerase A (241 aa).

Substrate is bound by residues 28 to 31, 83 to 86, and 96 to 99; these read TGST, DGAD, and KGGG. Glutamate 105 serves as the catalytic Proton acceptor. Lysine 123 is a substrate binding site.

The protein belongs to the ribose 5-phosphate isomerase family. As to quaternary structure, homodimer.

It carries out the reaction aldehydo-D-ribose 5-phosphate = D-ribulose 5-phosphate. Its pathway is carbohydrate degradation; pentose phosphate pathway; D-ribose 5-phosphate from D-ribulose 5-phosphate (non-oxidative stage): step 1/1. Catalyzes the reversible conversion of ribose-5-phosphate to ribulose 5-phosphate. In Rhodopseudomonas palustris (strain BisA53), this protein is Ribose-5-phosphate isomerase A.